Reading from the N-terminus, the 199-residue chain is Holliday junction branch migration complex subunit RuvA (199 aa).

Residues 1–64 are domain I; it reads MIALLTGKLA…EDAINLYGFR (64 aa). The domain II stretch occupies residues 65–143; it reads TQQEKELFQL…KLGLAQPQAG (79 aa). The segment at 144–148 is flexible linker; that stretch reads GTTAP. Residues 149–199 are domain III; it reads AKQEIRDDVLSALINLGYKEAVVQKALAELKVTEDATVELVLKQALKILMK.

This sequence belongs to the RuvA family. As to quaternary structure, homotetramer. Forms an RuvA(8)-RuvB(12)-Holliday junction (HJ) complex. HJ DNA is sandwiched between 2 RuvA tetramers; dsDNA enters through RuvA and exits via RuvB. An RuvB hexamer assembles on each DNA strand where it exits the tetramer. Each RuvB hexamer is contacted by two RuvA subunits (via domain III) on 2 adjacent RuvB subunits; this complex drives branch migration. In the full resolvosome a probable DNA-RuvA(4)-RuvB(12)-RuvC(2) complex forms which resolves the HJ.

It localises to the cytoplasm. Its function is as follows. The RuvA-RuvB-RuvC complex processes Holliday junction (HJ) DNA during genetic recombination and DNA repair, while the RuvA-RuvB complex plays an important role in the rescue of blocked DNA replication forks via replication fork reversal (RFR). RuvA specifically binds to HJ cruciform DNA, conferring on it an open structure. The RuvB hexamer acts as an ATP-dependent pump, pulling dsDNA into and through the RuvAB complex. HJ branch migration allows RuvC to scan DNA until it finds its consensus sequence, where it cleaves and resolves the cruciform DNA. The sequence is that of Holliday junction branch migration complex subunit RuvA from Citrifermentans bemidjiense (strain ATCC BAA-1014 / DSM 16622 / JCM 12645 / Bem) (Geobacter bemidjiensis).